Reading from the N-terminus, the 438-residue chain is Protein phosphatase 2C homolog 2 (438 aa).

Residues 23–294 form the PPM-type phosphatase domain; that stretch reads IYGVSAMQGW…DNMTMVIIGF (272 aa). Positions 67, 68, 236, and 285 each coordinate Mn(2+). A disordered region spans residues 370–438; that stretch reads VLTGSDDTEM…EKTPEESKKD (69 aa). Residues 375–387 show a composition bias toward acidic residues; it reads DDTEMFDNADEDK. Residues 398–438 are compositionally biased toward basic and acidic residues; it reads GKTDAKEETEAKPAPEAESSKPADGSEKKQDEKTPEESKKD.

This sequence belongs to the PP2C family. Mg(2+) is required as a cofactor. It depends on Mn(2+) as a cofactor.

It localises to the cytoplasm. The protein localises to the nucleus. It carries out the reaction O-phospho-L-seryl-[protein] + H2O = L-seryl-[protein] + phosphate. The enzyme catalyses O-phospho-L-threonyl-[protein] + H2O = L-threonyl-[protein] + phosphate. In terms of biological role, dephosphorylating regulator for many key proteins. Negatively regulates the endoplasmic reticulum unfolded protein response. The sequence is that of Protein phosphatase 2C homolog 2 from Hypocrea jecorina (strain QM6a) (Trichoderma reesei).